Here is a 395-residue protein sequence, read N- to C-terminus: Elongation factor Tu (395 aa).

The tr-type G domain maps to 10–204 (KPHLNIGTIG…TVDNYIKEPI (195 aa)). Residues 19 to 26 (GHVDHGKT) form a G1 region. 19–26 (GHVDHGKT) is a binding site for GTP. T26 lines the Mg(2+) pocket. Positions 60-64 (GITIN) are G2. Residues 81-84 (DCPG) are G3. Residues 81 to 85 (DCPGH) and 136 to 139 (NKVD) contribute to the GTP site. A G4 region spans residues 136–139 (NKVD). Residues 174-176 (SAL) form a G5 region.

It belongs to the TRAFAC class translation factor GTPase superfamily. Classic translation factor GTPase family. EF-Tu/EF-1A subfamily. As to quaternary structure, monomer.

It is found in the cytoplasm. The enzyme catalyses GTP + H2O = GDP + phosphate + H(+). In terms of biological role, GTP hydrolase that promotes the GTP-dependent binding of aminoacyl-tRNA to the A-site of ribosomes during protein biosynthesis. The chain is Elongation factor Tu from Karelsulcia muelleri (strain GWSS) (Sulcia muelleri).